The sequence spans 520 residues: Laccase (520 aa).

The first 21 residues, 1 to 21 (MSRFQSLLAFVVASLAAVAHA), serve as a signal peptide directing secretion. 2 Plastocyanin-like domains span residues 23 to 148 (IGPT…FVVY) and 160 to 302 (VDND…ILRY). N-linked (GlcNAc...) asparagine glycosylation is found at Asn-72 and Asn-75. Cu cation contacts are provided by His-85, His-87, His-130, and His-132. Intrachain disulfides connect Cys-106-Cys-509 and Cys-138-Cys-226. 3 N-linked (GlcNAc...) asparagine glycosylation sites follow: Asn-210, Asn-229, and Asn-354. The 123-residue stretch at 369-491 (TVPVLLQIIS…AGFAVVFAED (123 aa)) folds into the Plastocyanin-like 3 domain. 7 residues coordinate Cu cation: His-416, His-419, His-421, His-473, Cys-474, His-475, and His-479.

It belongs to the multicopper oxidase family. Cu cation is required as a cofactor.

The protein resides in the secreted. It catalyses the reaction 4 hydroquinone + O2 = 4 benzosemiquinone + 2 H2O. In terms of biological role, lignin degradation and detoxification of lignin-derived products. Has activity towards guaiacol. In Trametes hirsuta (White-rot fungus), this protein is Laccase.